Reading from the N-terminus, the 107-residue chain is Phosphoribosyl-ATP pyrophosphatase (107 aa).

It belongs to the PRA-PH family.

It is found in the cytoplasm. It carries out the reaction 1-(5-phospho-beta-D-ribosyl)-ATP + H2O = 1-(5-phospho-beta-D-ribosyl)-5'-AMP + diphosphate + H(+). The protein operates within amino-acid biosynthesis; L-histidine biosynthesis; L-histidine from 5-phospho-alpha-D-ribose 1-diphosphate: step 2/9. The sequence is that of Phosphoribosyl-ATP pyrophosphatase from Bacillus cereus (strain ATCC 14579 / DSM 31 / CCUG 7414 / JCM 2152 / NBRC 15305 / NCIMB 9373 / NCTC 2599 / NRRL B-3711).